The primary structure comprises 345 residues: Nicotinate-nucleotide--dimethylbenzimidazole phosphoribosyltransferase (345 aa).

The active-site Proton acceptor is glutamate 312.

Belongs to the CobT family.

The enzyme catalyses 5,6-dimethylbenzimidazole + nicotinate beta-D-ribonucleotide = alpha-ribazole 5'-phosphate + nicotinate + H(+). The protein operates within nucleoside biosynthesis; alpha-ribazole biosynthesis; alpha-ribazole from 5,6-dimethylbenzimidazole: step 1/2. Catalyzes the synthesis of alpha-ribazole-5'-phosphate from nicotinate mononucleotide (NAMN) and 5,6-dimethylbenzimidazole (DMB). This is Nicotinate-nucleotide--dimethylbenzimidazole phosphoribosyltransferase from Bacteroides fragilis (strain ATCC 25285 / DSM 2151 / CCUG 4856 / JCM 11019 / LMG 10263 / NCTC 9343 / Onslow / VPI 2553 / EN-2).